The following is a 360-amino-acid chain: Protein Wnt-2 (360 aa).

Residues 1–25 (MNSPLRGIWLWLPLLLTWLTPEVSS) form the signal peptide. 11 cysteine pairs are disulfide-bonded: cysteine 76–cysteine 87, cysteine 127–cysteine 135, cysteine 137–cysteine 157, cysteine 206–cysteine 220, cysteine 208–cysteine 215, cysteine 278–cysteine 309, cysteine 294–cysteine 304, cysteine 308–cysteine 348, cysteine 324–cysteine 339, cysteine 326–cysteine 336, and cysteine 331–cysteine 332. Serine 212 carries O-palmitoleoyl serine; by PORCN lipidation. Asparagine 295 is a glycosylation site (N-linked (GlcNAc...) asparagine).

Belongs to the Wnt family. In terms of processing, palmitoleoylation is required for efficient binding to frizzled receptors. Depalmitoleoylation leads to Wnt signaling pathway inhibition.

It is found in the secreted. The protein localises to the extracellular space. The protein resides in the extracellular matrix. Ligand for members of the frizzled family of seven transmembrane receptors. Functions in the canonical Wnt signaling pathway that results in activation of transcription factors of the TCF/LEF family. Functions as a upstream regulator of FGF10 expression. Plays an important role in embryonic lung development. May contribute to embryonic brain development by regulating the proliferation of dopaminergic precursors and neurons. This is Protein Wnt-2 (WNT2) from Callithrix jacchus (White-tufted-ear marmoset).